A 426-amino-acid polypeptide reads, in one-letter code: Serine hydroxymethyltransferase (426 aa).

(6S)-5,6,7,8-tetrahydrofolate is bound by residues Leu113 and 117–119; that span reads GHL. Lys222 is subject to N6-(pyridoxal phosphate)lysine. Position 363-365 (363-365) interacts with (6S)-5,6,7,8-tetrahydrofolate; the sequence is SAF.

Belongs to the SHMT family. Homodimer. Pyridoxal 5'-phosphate is required as a cofactor.

It localises to the cytoplasm. It catalyses the reaction (6R)-5,10-methylene-5,6,7,8-tetrahydrofolate + glycine + H2O = (6S)-5,6,7,8-tetrahydrofolate + L-serine. It participates in one-carbon metabolism; tetrahydrofolate interconversion. It functions in the pathway amino-acid biosynthesis; glycine biosynthesis; glycine from L-serine: step 1/1. Catalyzes the reversible interconversion of serine and glycine with tetrahydrofolate (THF) serving as the one-carbon carrier. This reaction serves as the major source of one-carbon groups required for the biosynthesis of purines, thymidylate, methionine, and other important biomolecules. Also exhibits THF-independent aldolase activity toward beta-hydroxyamino acids, producing glycine and aldehydes, via a retro-aldol mechanism. The sequence is that of Serine hydroxymethyltransferase from Porphyromonas gingivalis (strain ATCC 33277 / DSM 20709 / CIP 103683 / JCM 12257 / NCTC 11834 / 2561).